The following is a 314-amino-acid chain: 4-hydroxy-3-methylbut-2-enyl diphosphate reductase (314 aa).

Cys12 contacts [4Fe-4S] cluster. Residues His43 and His81 each contribute to the (2E)-4-hydroxy-3-methylbut-2-enyl diphosphate site. Residues His43 and His81 each contribute to the dimethylallyl diphosphate site. His43 and His81 together coordinate isopentenyl diphosphate. Cys103 serves as a coordination point for [4Fe-4S] cluster. A (2E)-4-hydroxy-3-methylbut-2-enyl diphosphate-binding site is contributed by His131. His131 is a binding site for dimethylallyl diphosphate. Position 131 (His131) interacts with isopentenyl diphosphate. Residue Glu133 is the Proton donor of the active site. Thr170 contributes to the (2E)-4-hydroxy-3-methylbut-2-enyl diphosphate binding site. Cys198 is a binding site for [4Fe-4S] cluster. Residues Ser226, Asn228, and Ser271 each contribute to the (2E)-4-hydroxy-3-methylbut-2-enyl diphosphate site. Residues Ser226, Asn228, and Ser271 each contribute to the dimethylallyl diphosphate site. The isopentenyl diphosphate site is built by Ser226, Asn228, and Ser271.

Belongs to the IspH family. [4Fe-4S] cluster is required as a cofactor.

It carries out the reaction isopentenyl diphosphate + 2 oxidized [2Fe-2S]-[ferredoxin] + H2O = (2E)-4-hydroxy-3-methylbut-2-enyl diphosphate + 2 reduced [2Fe-2S]-[ferredoxin] + 2 H(+). The catalysed reaction is dimethylallyl diphosphate + 2 oxidized [2Fe-2S]-[ferredoxin] + H2O = (2E)-4-hydroxy-3-methylbut-2-enyl diphosphate + 2 reduced [2Fe-2S]-[ferredoxin] + 2 H(+). Its pathway is isoprenoid biosynthesis; dimethylallyl diphosphate biosynthesis; dimethylallyl diphosphate from (2E)-4-hydroxy-3-methylbutenyl diphosphate: step 1/1. It participates in isoprenoid biosynthesis; isopentenyl diphosphate biosynthesis via DXP pathway; isopentenyl diphosphate from 1-deoxy-D-xylulose 5-phosphate: step 6/6. In terms of biological role, catalyzes the conversion of 1-hydroxy-2-methyl-2-(E)-butenyl 4-diphosphate (HMBPP) into a mixture of isopentenyl diphosphate (IPP) and dimethylallyl diphosphate (DMAPP). Acts in the terminal step of the DOXP/MEP pathway for isoprenoid precursor biosynthesis. This is 4-hydroxy-3-methylbut-2-enyl diphosphate reductase from Shouchella clausii (strain KSM-K16) (Alkalihalobacillus clausii).